A 410-amino-acid chain; its full sequence is Multifunctional CCA protein (410 aa).

ATP-binding residues include G8 and R11. G8 and R11 together coordinate CTP. E21 and D23 together coordinate Mg(2+). 3 residues coordinate ATP: R91, R137, and R140. Residues R91, R137, and R140 each coordinate CTP. The region spanning 228 to 329 is the HD domain; sequence TLLHQFLCLK…WKLFKSLDIL (102 aa).

The protein belongs to the tRNA nucleotidyltransferase/poly(A) polymerase family. Bacterial CCA-adding enzyme type 1 subfamily. As to quaternary structure, monomer. Can also form homodimers and oligomers. Mg(2+) is required as a cofactor. Ni(2+) serves as cofactor.

The enzyme catalyses a tRNA precursor + 2 CTP + ATP = a tRNA with a 3' CCA end + 3 diphosphate. The catalysed reaction is a tRNA with a 3' CCA end + 2 CTP + ATP = a tRNA with a 3' CCACCA end + 3 diphosphate. Its function is as follows. Catalyzes the addition and repair of the essential 3'-terminal CCA sequence in tRNAs without using a nucleic acid template. Adds these three nucleotides in the order of C, C, and A to the tRNA nucleotide-73, using CTP and ATP as substrates and producing inorganic pyrophosphate. tRNA 3'-terminal CCA addition is required both for tRNA processing and repair. Also involved in tRNA surveillance by mediating tandem CCA addition to generate a CCACCA at the 3' terminus of unstable tRNAs. While stable tRNAs receive only 3'-terminal CCA, unstable tRNAs are marked with CCACCA and rapidly degraded. The protein is Multifunctional CCA protein of Alcanivorax borkumensis (strain ATCC 700651 / DSM 11573 / NCIMB 13689 / SK2).